The primary structure comprises 556 residues: Glutamine--tRNA ligase (556 aa).

The short motif at 34–44 is the 'HIGH' region element; sequence PEPNGYLHIGH. ATP contacts are provided by residues 35-37 and 41-47; these read EPN and HIGHAKS. The L-glutamine site is built by aspartate 67 and tyrosine 212. Residues threonine 231, 261 to 262, and 269 to 271 contribute to the ATP site; these read RL and MSK. Positions 268–272 match the 'KMSKS' region motif; the sequence is VMSKR.

The protein belongs to the class-I aminoacyl-tRNA synthetase family. As to quaternary structure, monomer.

It localises to the cytoplasm. The catalysed reaction is tRNA(Gln) + L-glutamine + ATP = L-glutaminyl-tRNA(Gln) + AMP + diphosphate. The protein is Glutamine--tRNA ligase of Vibrio campbellii (strain ATCC BAA-1116).